A 244-amino-acid polypeptide reads, in one-letter code: uncharacterized protein (244 aa).

Residues Gln-5–Asn-244 enclose the GP-PDE domain.

It to glycerophosphoryl diester phosphodiesterases (EC 3.1.4.46). To M.genitalium MG385.

This is an uncharacterized protein from Mycoplasma genitalium (strain ATCC 33530 / DSM 19775 / NCTC 10195 / G37) (Mycoplasmoides genitalium).